The sequence spans 810 residues: RING finger protein unkempt homolog (810 aa).

Residues 1–24 (MSKGPGPGGSAASSAPPAATAQVL) form a disordered region. A compositionally biased stretch (low complexity) spans 10-19 (SAASSAPPAA). C3H1-type zinc fingers lie at residues 84 to 113 (YSPD…HRTT), 124 to 154 (YYKT…HGPH), 215 to 241 (NYKT…HNSK), 251 to 285 (KYRS…HTRT), and 293 to 321 (IYKS…HIEP). The tract at residues 239 to 265 (NSKDRRRSPRKHKYRSSPCPNVKHGDE) is disordered. A Phosphoserine modification is found at serine 240. Basic residues predominate over residues 241-253 (KDRRRSPRKHKYR). Residues serine 374, serine 378, serine 385, and serine 394 each carry the phosphoserine modification. The disordered stretch occupies residues 478 to 497 (TSSLAATPPSPAGTNSTPGM). At serine 631 the chain carries Phosphoserine. The stretch at 643–727 (GAAELARLRQ…ERLHTVPEAQ (85 aa)) forms a coiled coil. Residues 766–801 (SVKCLKCQEQTRAVLPCQHAVLCELCAEGSECPVCQ) form an RING-type; degenerate zinc finger.

Belongs to the unkempt family.

It localises to the cytoplasm. In terms of biological role, sequence-specific RNA-binding protein which plays an important role in the establishment and maintenance of the early morphology of cortical neurons during embryonic development. Acts as a translation repressor and controls a translationally regulated cell morphology program to ensure proper structuring of the nervous system. Translational control depends on recognition of its binding element within target mRNAs which consists of a mandatory UAG trimer upstream of a U/A-rich motif. Associated with polysomes. The chain is RING finger protein unkempt homolog (Unk) from Mus musculus (Mouse).